A 539-amino-acid polypeptide reads, in one-letter code: Phosphoenolpyruvate carboxykinase (ATP) (539 aa).

Positions 64, 206, and 212 each coordinate substrate. ATP contacts are provided by residues K212, H231, and 247–255 (GLSGTGKTT). 2 residues coordinate Mn(2+): K212 and H231. D268 contacts Mn(2+). ATP contacts are provided by residues E296, R332, 448 to 449 (RI), and T454. R332 serves as a coordination point for substrate.

This sequence belongs to the phosphoenolpyruvate carboxykinase (ATP) family. In terms of assembly, monomer. Requires Mn(2+) as cofactor.

The protein localises to the cytoplasm. It catalyses the reaction oxaloacetate + ATP = phosphoenolpyruvate + ADP + CO2. It functions in the pathway carbohydrate biosynthesis; gluconeogenesis. Functionally, involved in the gluconeogenesis. Catalyzes the conversion of oxaloacetate (OAA) to phosphoenolpyruvate (PEP) through direct phosphoryl transfer between the nucleoside triphosphate and OAA. This chain is Phosphoenolpyruvate carboxykinase (ATP), found in Salmonella agona (strain SL483).